The primary structure comprises 3567 residues: Sushi, von Willebrand factor type A, EGF and pentraxin domain-containing protein 1 (3567 aa).

A signal peptide spans 1-17 (MWSRLAFCCWALALVSG). A VWFA domain is found at 84–265 (ELVFLVDESS…LARRALHEDL (182 aa)). Asn-187 carries an N-linked (GlcNAc...) asparagine glycan. Sushi domains are found at residues 377–436 (VHCP…FCRV), 437–496 (RTCP…RCVE), and 497–561 (RHCA…VCKD). 6 disulfide bridges follow: Cys-379–Cys-421, Cys-407–Cys-434, Cys-439–Cys-481, Cys-467–Cys-494, Cys-499–Cys-544, and Cys-530–Cys-559. HYR domains follow at residues 560-644 (KDVE…KVID) and 645-724 (VEPP…VIKG). The Sushi 4 domain occupies 725 to 789 (SPCEVPFTPV…YSTEWPDCAI (65 aa)). 20 disulfide bridges follow: Cys-727–Cys-769, Cys-753–Cys-787, Cys-1196–Cys-1207, Cys-1201–Cys-1216, Cys-1218–Cys-1227, Cys-1234–Cys-1245, Cys-1239–Cys-1254, Cys-1256–Cys-1265, Cys-1272–Cys-1283, Cys-1277–Cys-1292, Cys-1294–Cys-1303, Cys-1310–Cys-1321, Cys-1315–Cys-1330, Cys-1332–Cys-1341, Cys-1348–Cys-1359, Cys-1353–Cys-1368, Cys-1370–Cys-1379, Cys-1386–Cys-1397, Cys-1391–Cys-1406, and Cys-1408–Cys-1417. One can recognise an EGF-like 1 domain in the interval 1192–1228 (VFHECFLNPCHNSGTCQQLGRGYVCLCPPGYTGLKCE). One can recognise an EGF-like 2; calcium-binding domain in the interval 1230-1266 (DIDECSSLPCLNGGICRDQVGGFTCECSLGYSGQICE). An EGF-like 3; calcium-binding domain is found at 1268 to 1304 (NINECISSPCLNKGTCTDGLASYRCTCVKGYMGVHCE). Residues 1306–1342 (DVNECQSSPCLNNAVCKDQVGGFSCKCPPGFLGTRCE) enclose the EGF-like 4; calcium-binding domain. Residues 1344 to 1380 (NVDECLSQPCQNGATCKDGANSFRCQCPAGFTGTHCE) enclose the EGF-like 5; calcium-binding domain. Residues 1382-1418 (NINECQSNPCRNQATCVDELNSYSCKCQPGFSGHRCE) enclose the EGF-like 6; calcium-binding domain. Positions 1423 to 1627 (SGFNLDFEVS…VKVDSSSMFC (205 aa)) constitute a Pentraxin (PTX) domain. Sushi domains are found at residues 1628–1686 (SDCP…HCER) and 1687–1744 (IRCG…SCLD). 35 disulfide bridges follow: Cys-1630–Cys-1671, Cys-1657–Cys-1684, Cys-1689–Cys-1729, Cys-1715–Cys-1742, Cys-1748–Cys-1760, Cys-1754–Cys-1769, Cys-1771–Cys-1782, Cys-1788–Cys-1828, Cys-1814–Cys-1841, Cys-1846–Cys-1886, Cys-1872–Cys-1899, Cys-1904–Cys-1944, Cys-1930–Cys-1957, Cys-1962–Cys-2002, Cys-1988–Cys-2015, Cys-2020–Cys-2060, Cys-2046–Cys-2077, Cys-2082–Cys-2125, Cys-2111–Cys-2140, Cys-2145–Cys-2185, Cys-2171–Cys-2198, Cys-2203–Cys-2244, Cys-2230–Cys-2258, Cys-2263–Cys-2303, Cys-2289–Cys-2317, Cys-2322–Cys-2362, Cys-2348–Cys-2375, Cys-2380–Cys-2421, Cys-2407–Cys-2434, Cys-2439–Cys-2479, Cys-2465–Cys-2492, Cys-2497–Cys-2537, Cys-2523–Cys-2550, Cys-2555–Cys-2595, and Cys-2581–Cys-2607. An EGF-like 7; calcium-binding domain is found at 1744–1783 (DVDECAVGSDCSEHASCLNTNGSYVCSCNPPYTGDGKNCA). Sushi domains lie at 1780–1843 (KNCA…SCEA), 1844–1901 (ISCG…VCEL), 1902–1959 (VKCS…SCQL), 1960–2017 (VSCG…QCLA), 2018–2079 (VSCD…RCIA), 2080–2142 (HFCE…QCIP), 2143–2200 (VRCG…TCHP), 2201–2260 (VSCN…SCTP), 2261–2319 (LNCG…KCVP), 2320–2377 (TKCA…ICKM), 2378–2436 (VLCP…ECVP), 2437–2494 (VECP…MCKP), 2495–2552 (IECP…SCDA), and 2553–2609 (IHCS…TCVP). An important for the interaction with integrin ITGA9:ITGB1 region spans residues 2638 to 2645 (DMMEVPYL). 14 Sushi domains span residues 2660–2711 (NTKE…SCIS), 2712–2769 (IECD…RCEA), 2770–2827 (ISCS…MCIP), 2828–2885 (VDCG…SCMP), 2886–2943 (VRCP…VCKP), 2944–3001 (ATCG…SCLP), 3002–3057 (CRCS…LCEH), 3058–3115 (AQCG…TCEP), 3116–3174 (LSCG…TCSP), 3175–3234 (KKCP…SCIP), 3235–3292 (VVCG…VCRE), 3293–3350 (NRCE…LCKP), 3351–3409 (NPCP…RCEK), and 3410–3466 (ISCG…VCRA). 33 cysteine pairs are disulfide-bonded: Cys-2682–Cys-2709, Cys-2714–Cys-2754, Cys-2740–Cys-2767, Cys-2772–Cys-2812, Cys-2798–Cys-2825, Cys-2830–Cys-2870, Cys-2856–Cys-2883, Cys-2888–Cys-2928, Cys-2914–Cys-2941, Cys-2946–Cys-2986, Cys-2972–Cys-2999, Cys-3004–Cys-3043, Cys-3029–Cys-3055, Cys-3060–Cys-3100, Cys-3086–Cys-3113, Cys-3118–Cys-3159, Cys-3144–Cys-3172, Cys-3177–Cys-3217, Cys-3203–Cys-3232, Cys-3237–Cys-3277, Cys-3263–Cys-3290, Cys-3295–Cys-3335, Cys-3321–Cys-3348, Cys-3353–Cys-3394, Cys-3380–Cys-3407, Cys-3412–Cys-3452, Cys-3438–Cys-3464, Cys-3500–Cys-3510, Cys-3504–Cys-3516, Cys-3518–Cys-3527, Cys-3532–Cys-3542, Cys-3536–Cys-3548, and Cys-3550–Cys-3559. EGF-like domains lie at 3496-3528 (EEPI…SRCH) and 3529-3560 (TATC…HDCS).

Interacts (via Sushi domain 21) with ITGA9:ITGB1; thereby inhibits Ca(2+) intracellular signaling and as a result represses vasocontraction. Interacts (via Sushi domain 21) with ITGA4:ITGB1; thereby inhibits Ca(2+) intracellular signaling and as a result represses vasocontraction. Interacts with ANGPT1 and ANGPT2. Interacts with PEAR1 (via extracellular domain). Interacts with HSPG2, TLN1, FN1, COPA, CCT2, IQGAP1, LAMC1 and NID1. Interacts (via C-terminus) with TIE1. In terms of tissue distribution, expressed in the media layer of the arterial wall (at protein level). Highly expressed in lung and placenta, weakly expressed in the kidney, heart, brain and spleen. Also expressed in bone and periosteum, but not in cartilage and skeletal muscle.

It is found in the secreted. The protein resides in the nucleus. The protein localises to the cytoplasm. It localises to the membrane. Required for morphological development, cell alignment and migration of lymphatic endothelial cells during embryonic development, potentially via modulation of ANGPT2-TIE1 signaling and subsequent activation of FOXC2 transcription. Required for embryonic lymphatic vascular development, via mediating the correct formation of the first lymphovenous contact site and tight association of the lymphatic endothelium with the venous endothelium. Represses PRKCA-mediated L-type voltage-gated channel Ca(2+) influx and ROCK-mediated calcium sensitivity in vascular smooth muscle cells, via its interaction with integrins, thereby inhibiting vasocontraction. Promotes platelet activation, via its interaction with PEAR1 and subsequent activation of AKT/mTOR signaling. Plays a role in epidermal development and keratinocyte differentiation, independent of cell-cell adhesion. May play a role in initial cell attachment of stromal osteogenic cells. May promote myoblast cell adhesion when in the presence of integrin ITGA9:ITGB1. This Mus musculus (Mouse) protein is Sushi, von Willebrand factor type A, EGF and pentraxin domain-containing protein 1 (Svep1).